Here is a 643-residue protein sequence, read N- to C-terminus: 1-deoxy-D-xylulose-5-phosphate synthase (643 aa).

Residues His-72 and 113–115 (GHA) contribute to the thiamine diphosphate site. Asp-144 contacts Mg(2+). Thiamine diphosphate-binding positions include 145–146 (GA), Asn-174, Tyr-287, and Glu-370. Position 174 (Asn-174) interacts with Mg(2+).

This sequence belongs to the transketolase family. DXPS subfamily. As to quaternary structure, homodimer. Mg(2+) is required as a cofactor. Requires thiamine diphosphate as cofactor.

It carries out the reaction D-glyceraldehyde 3-phosphate + pyruvate + H(+) = 1-deoxy-D-xylulose 5-phosphate + CO2. It participates in metabolic intermediate biosynthesis; 1-deoxy-D-xylulose 5-phosphate biosynthesis; 1-deoxy-D-xylulose 5-phosphate from D-glyceraldehyde 3-phosphate and pyruvate: step 1/1. Functionally, catalyzes the acyloin condensation reaction between C atoms 2 and 3 of pyruvate and glyceraldehyde 3-phosphate to yield 1-deoxy-D-xylulose-5-phosphate (DXP). This Synechococcus sp. (strain CC9605) protein is 1-deoxy-D-xylulose-5-phosphate synthase.